Consider the following 397-residue polypeptide: CCA-adding enzyme (397 aa).

ATP is bound by residues glycine 26 and arginine 29. Positions 26 and 29 each coordinate CTP. Mg(2+) contacts are provided by aspartate 39 and aspartate 41. The ATP site is built by arginine 110, aspartate 153, arginine 156, arginine 159, and arginine 162. 5 residues coordinate CTP: arginine 110, aspartate 153, arginine 156, arginine 159, and arginine 162.

This sequence belongs to the tRNA nucleotidyltransferase/poly(A) polymerase family. Bacterial CCA-adding enzyme type 3 subfamily. In terms of assembly, homodimer. Requires Mg(2+) as cofactor.

It catalyses the reaction a tRNA precursor + 2 CTP + ATP = a tRNA with a 3' CCA end + 3 diphosphate. The catalysed reaction is a tRNA with a 3' CCA end + 2 CTP + ATP = a tRNA with a 3' CCACCA end + 3 diphosphate. In terms of biological role, catalyzes the addition and repair of the essential 3'-terminal CCA sequence in tRNAs without using a nucleic acid template. Adds these three nucleotides in the order of C, C, and A to the tRNA nucleotide-73, using CTP and ATP as substrates and producing inorganic pyrophosphate. tRNA 3'-terminal CCA addition is required both for tRNA processing and repair. Also involved in tRNA surveillance by mediating tandem CCA addition to generate a CCACCA at the 3' terminus of unstable tRNAs. While stable tRNAs receive only 3'-terminal CCA, unstable tRNAs are marked with CCACCA and rapidly degraded. The chain is CCA-adding enzyme from Bacillus mycoides (strain KBAB4) (Bacillus weihenstephanensis).